The following is a 489-amino-acid chain: Mitochondrial-processing peptidase subunit beta (489 aa).

A mitochondrion-targeting transit peptide spans 1–45 (MAAAAARVVLLPAARRRLWGFSESLLIRGAAGRSSYFGENRLRST). Histidine 101 is a Zn(2+) binding site. Glutamate 104 functions as the Proton acceptor in the catalytic mechanism. Residues histidine 105 and glutamate 181 each contribute to the Zn(2+) site.

This sequence belongs to the peptidase M16 family. Heterodimer of PMPCA (alpha) and PMPCB (beta) subunits, forming the mitochondrial processing protease (MPP) in which PMPCA is involved in substrate recognition and binding and PMPCB is the catalytic subunit. Zn(2+) serves as cofactor.

The protein localises to the mitochondrion matrix. The catalysed reaction is Release of N-terminal transit peptides from precursor proteins imported into the mitochondrion, typically with Arg in position P2.. Its activity is regulated as follows. Binding to PMPCA is required for catalytic activity. In terms of biological role, catalytic subunit of the essential mitochondrial processing protease (MPP), which cleaves the mitochondrial sequence off newly imported precursors proteins. Preferentially, cleaves after an arginine at position P2. Required for PINK1 turnover by coupling PINK1 mitochondrial import and cleavage, which results in subsequent PINK1 proteolysis. The polypeptide is Mitochondrial-processing peptidase subunit beta (PMPCB) (Pongo abelii (Sumatran orangutan)).